A 293-amino-acid polypeptide reads, in one-letter code: 4-hydroxy-tetrahydrodipicolinate synthase (293 aa).

A pyruvate-binding site is contributed by T47. Y135 functions as the Proton donor/acceptor in the catalytic mechanism. The active-site Schiff-base intermediate with substrate is K163. Pyruvate is bound at residue I204.

The protein belongs to the DapA family. As to quaternary structure, homotetramer; dimer of dimers.

Its subcellular location is the cytoplasm. The catalysed reaction is L-aspartate 4-semialdehyde + pyruvate = (2S,4S)-4-hydroxy-2,3,4,5-tetrahydrodipicolinate + H2O + H(+). Its pathway is amino-acid biosynthesis; L-lysine biosynthesis via DAP pathway; (S)-tetrahydrodipicolinate from L-aspartate: step 3/4. Catalyzes the condensation of (S)-aspartate-beta-semialdehyde [(S)-ASA] and pyruvate to 4-hydroxy-tetrahydrodipicolinate (HTPA). The polypeptide is 4-hydroxy-tetrahydrodipicolinate synthase (Brachyspira hyodysenteriae (strain ATCC 49526 / WA1)).